A 340-amino-acid polypeptide reads, in one-letter code: Glycerol-3-phosphate dehydrogenase [NAD(P)+] (340 aa).

The NADPH site is built by Ser-13, Trp-14, and Lys-108. 3 residues coordinate sn-glycerol 3-phosphate: Lys-108, Gly-139, and Ser-141. Residue Ala-143 coordinates NADPH. Sn-glycerol 3-phosphate is bound by residues Lys-194, Asp-247, Ser-257, Arg-258, and Asn-259. Lys-194 acts as the Proton acceptor in catalysis. Position 258 (Arg-258) interacts with NADPH. The NADPH site is built by Val-282 and Glu-284.

This sequence belongs to the NAD-dependent glycerol-3-phosphate dehydrogenase family.

The protein resides in the cytoplasm. The enzyme catalyses sn-glycerol 3-phosphate + NAD(+) = dihydroxyacetone phosphate + NADH + H(+). It catalyses the reaction sn-glycerol 3-phosphate + NADP(+) = dihydroxyacetone phosphate + NADPH + H(+). Its pathway is membrane lipid metabolism; glycerophospholipid metabolism. Functionally, catalyzes the reduction of the glycolytic intermediate dihydroxyacetone phosphate (DHAP) to sn-glycerol 3-phosphate (G3P), the key precursor for phospholipid synthesis. In Streptococcus thermophilus (strain CNRZ 1066), this protein is Glycerol-3-phosphate dehydrogenase [NAD(P)+].